Reading from the N-terminus, the 228-residue chain is 2,3-bisphosphoglycerate-dependent phosphoglycerate mutase (228 aa).

Residues 8-15 (RHGQSVWN), 21-22 (SG), arginine 58, 111-114 (ERMY), lysine 122, 138-139 (RR), and 182-183 (GN) contribute to the substrate site. Histidine 9 functions as the Tele-phosphohistidine intermediate in the catalytic mechanism. The active-site Proton donor/acceptor is glutamate 111.

This sequence belongs to the phosphoglycerate mutase family. BPG-dependent PGAM subfamily.

The enzyme catalyses (2R)-2-phosphoglycerate = (2R)-3-phosphoglycerate. The protein operates within carbohydrate degradation; glycolysis; pyruvate from D-glyceraldehyde 3-phosphate: step 3/5. Functionally, catalyzes the interconversion of 2-phosphoglycerate and 3-phosphoglycerate. This chain is 2,3-bisphosphoglycerate-dependent phosphoglycerate mutase, found in Chlamydia pneumoniae (Chlamydophila pneumoniae).